We begin with the raw amino-acid sequence, 173 residues long: Archaemetzincin (173 aa).

His130 serves as a coordination point for Zn(2+). Residue Glu131 is the Proton acceptor of the active site. Positions 134, 140, 141, 146, 165, and 168 each coordinate Zn(2+).

This sequence belongs to the peptidase M54 family. In terms of assembly, monomer. The cofactor is Zn(2+).

In terms of biological role, probable zinc metalloprotease whose natural substrate is unknown. The chain is Archaemetzincin from Haloquadratum walsbyi (strain DSM 16790 / HBSQ001).